A 20-amino-acid polypeptide reads, in one-letter code: Phosphoglycerate kinase (20 aa).

The tract at residues 1–20 (MNKKSIRNVNLKGKRVFDRV) is disordered.

It belongs to the phosphoglycerate kinase family. In terms of assembly, monomer.

Its subcellular location is the cytoplasm. It catalyses the reaction (2R)-3-phosphoglycerate + ATP = (2R)-3-phospho-glyceroyl phosphate + ADP. It participates in carbohydrate degradation; glycolysis; pyruvate from D-glyceraldehyde 3-phosphate: step 2/5. The protein is Phosphoglycerate kinase of Bacillus cereus.